We begin with the raw amino-acid sequence, 328 residues long: Homeobox protein DLX-2 (328 aa).

2 stretches are compositionally biased toward polar residues: residues 16 to 28 (QIAA…QHQQ) and 52 to 72 (ESPT…NQQH). Disordered regions lie at residues 16-81 (QIAA…GGGG), 211-270 (WKSG…SSPS), and 300-328 (LHPT…GTIF). The homeobox DNA-binding region spans 152-211 (VRKPRTIYSSFQLAALQRRFQKTQYLALPERAELAASLGLTQTQVKIWFQNRRSKFKKMW). The residue at position 232 (serine 232) is a Phosphoserine. A compositionally biased stretch (gly residues) spans 250 to 264 (AGGGGPGSGGSGAGS).

The protein belongs to the distal-less homeobox family. Interacts (via homeobox DNA-binding domain) with POU4F2; this interaction enhances retinal ganglion cell (RGC) differentiation.

The protein localises to the nucleus. Acts as a transcriptional activator. Activates transcription of CGA/alpha-GSU, via binding to the downstream activin regulatory element (DARE) in the gene promoter. Plays a role in terminal differentiation of interneurons, such as amacrine and bipolar cells in the developing retina. Likely to play a regulatory role in the development of the ventral forebrain. May play a role in craniofacial patterning and morphogenesis. The sequence is that of Homeobox protein DLX-2 (DLX2) from Homo sapiens (Human).